The primary structure comprises 154 residues: Urease accessory protein UreE (154 aa).

Positions 134 to 154 are disordered; it reads PESGAYGKSGHNHGHSHSHED. The segment covering 143–154 has biased composition (basic residues); that stretch reads GHNHGHSHSHED.

It belongs to the UreE family.

The protein resides in the cytoplasm. Its function is as follows. Involved in urease metallocenter assembly. Binds nickel. Probably functions as a nickel donor during metallocenter assembly. The protein is Urease accessory protein UreE of Alteromonas mediterranea (strain DSM 17117 / CIP 110805 / LMG 28347 / Deep ecotype).